The chain runs to 293 residues: Mating-type protein A-1 (293 aa).

A DNA-binding region (alpha box) is located at residues 42 to 97 (AAKKKVNGFMGFRSYYSPLFSQLPQKERSPFMTILWQHDPFHNEWDFMCSVYSSIR).

Belongs to the MATALPHA1 family.

The protein resides in the nucleus. Mating type proteins are sequence specific DNA-binding proteins that act as master switches in yeast differentiation by controlling gene expression in a cell type-specific fashion. Transcriptional activator that induces the transcription of A-specific genes like mating factor ccg-4. Required for mating as an A-cell and for blocking of heterokaryon formation (vegetative incompatibility). This is Mating-type protein A-1 (mtA-1) from Neurospora crassa (strain ATCC 24698 / 74-OR23-1A / CBS 708.71 / DSM 1257 / FGSC 987).